The following is a 1102-amino-acid chain: Carbamoyl phosphate synthase large chain (1102 aa).

The segment at 1–408 (MPKRSDIQSV…ALQKALRSLE (408 aa)) is carboxyphosphate synthetic domain. 12 residues coordinate ATP: Arg129, Arg175, Gly181, Gly182, Glu214, Ile216, Glu221, Gly247, Val248, His249, Gln291, and Glu305. An ATP-grasp 1 domain is found at 137–334 (EAVKEKIGYG…IAKIAAKLAV (198 aa)). Gln291, Glu305, and Asn307 together coordinate Mg(2+). The Mn(2+) site is built by Gln291, Glu305, and Asn307. An oligomerization domain region spans residues 409–551 (KKGSQFAFTG…YFYSSYDEES (143 aa)). Residues 552–954 (EVAPRTKPAV…AYAKSQAGAY (403 aa)) are carbamoyl phosphate synthetic domain. The ATP-grasp 2 domain maps to 682 to 873 (GRVLAEAGLP…LAKAAARISL (192 aa)). Residues Arg718, Arg757, Leu759, Glu764, Gly789, Ile790, His791, Ser792, Gln832, and Glu844 each contribute to the ATP site. Mg(2+) is bound by residues Gln832, Glu844, and Asn846. Residues Gln832, Glu844, and Asn846 each coordinate Mn(2+). One can recognise an MGS-like domain in the interval 955-1100 (GPLPTAGRAF…QEHAEHLTAA (146 aa)). The tract at residues 955 to 1102 (GPLPTAGRAF…HAEHLTAARD (148 aa)) is allosteric domain.

Belongs to the CarB family. As to quaternary structure, composed of two chains; the small (or glutamine) chain promotes the hydrolysis of glutamine to ammonia, which is used by the large (or ammonia) chain to synthesize carbamoyl phosphate. Tetramer of heterodimers (alpha,beta)4. The cofactor is Mg(2+). It depends on Mn(2+) as a cofactor.

It catalyses the reaction hydrogencarbonate + L-glutamine + 2 ATP + H2O = carbamoyl phosphate + L-glutamate + 2 ADP + phosphate + 2 H(+). The catalysed reaction is hydrogencarbonate + NH4(+) + 2 ATP = carbamoyl phosphate + 2 ADP + phosphate + 2 H(+). It functions in the pathway amino-acid biosynthesis; L-arginine biosynthesis; carbamoyl phosphate from bicarbonate: step 1/1. Its pathway is pyrimidine metabolism; UMP biosynthesis via de novo pathway; (S)-dihydroorotate from bicarbonate: step 1/3. Its function is as follows. Large subunit of the glutamine-dependent carbamoyl phosphate synthetase (CPSase). CPSase catalyzes the formation of carbamoyl phosphate from the ammonia moiety of glutamine, carbonate, and phosphate donated by ATP, constituting the first step of 2 biosynthetic pathways, one leading to arginine and/or urea and the other to pyrimidine nucleotides. The large subunit (synthetase) binds the substrates ammonia (free or transferred from glutamine from the small subunit), hydrogencarbonate and ATP and carries out an ATP-coupled ligase reaction, activating hydrogencarbonate by forming carboxy phosphate which reacts with ammonia to form carbamoyl phosphate. The polypeptide is Carbamoyl phosphate synthase large chain (Streptomyces griseus subsp. griseus (strain JCM 4626 / CBS 651.72 / NBRC 13350 / KCC S-0626 / ISP 5235)).